Here is a 500-residue protein sequence, read N- to C-terminus: ACT domain-containing protein ACR2 (500 aa).

ACT domains lie at 39 to 121 (VVKV…EANN), 136 to 213 (AIEM…ADPA), 298 to 373 (IVTV…RVCE), and 376 to 459 (KLEL…TVGS). Residues 450-478 (EDTKIDTVGSDEPTASASATPQRQPQPHR) are disordered. Residues 462–474 (PTASASATPQRQP) show a composition bias toward polar residues.

In terms of biological role, may bind amino acids. In Arabidopsis thaliana (Mouse-ear cress), this protein is ACT domain-containing protein ACR2.